The primary structure comprises 354 residues: UDP-3-O-acylglucosamine N-acyltransferase (354 aa).

The Proton acceptor role is filled by His245.

This sequence belongs to the transferase hexapeptide repeat family. LpxD subfamily. Homotrimer.

The catalysed reaction is a UDP-3-O-[(3R)-3-hydroxyacyl]-alpha-D-glucosamine + a (3R)-hydroxyacyl-[ACP] = a UDP-2-N,3-O-bis[(3R)-3-hydroxyacyl]-alpha-D-glucosamine + holo-[ACP] + H(+). Its pathway is bacterial outer membrane biogenesis; LPS lipid A biosynthesis. Its function is as follows. Catalyzes the N-acylation of UDP-3-O-acylglucosamine using 3-hydroxyacyl-ACP as the acyl donor. Is involved in the biosynthesis of lipid A, a phosphorylated glycolipid that anchors the lipopolysaccharide to the outer membrane of the cell. This chain is UDP-3-O-acylglucosamine N-acyltransferase, found in Anaeromyxobacter dehalogenans (strain 2CP-C).